The primary structure comprises 224 residues: tRNA (guanine-N(7)-)-methyltransferase (224 aa).

Positions 54, 79, 106, and 129 each coordinate S-adenosyl-L-methionine. D129 is a catalytic residue. The substrate site is built by K133 and D165.

It belongs to the class I-like SAM-binding methyltransferase superfamily. TrmB family.

The catalysed reaction is guanosine(46) in tRNA + S-adenosyl-L-methionine = N(7)-methylguanosine(46) in tRNA + S-adenosyl-L-homocysteine. Its pathway is tRNA modification; N(7)-methylguanine-tRNA biosynthesis. Its function is as follows. Catalyzes the formation of N(7)-methylguanine at position 46 (m7G46) in tRNA. The chain is tRNA (guanine-N(7)-)-methyltransferase from Chlamydia caviae (strain ATCC VR-813 / DSM 19441 / 03DC25 / GPIC) (Chlamydophila caviae).